Here is a 471-residue protein sequence, read N- to C-terminus: Ankyrin repeat and death domain-containing protein 1A (471 aa).

10 ANK repeats span residues 19–48, 52–81, 85–114, 120–149, 153–182, 186–215, 219–248, 251–280, 284–313, and 317–346; these read VGRV…AVDE, FGMN…KIHC, DGLT…DVAL, LGRT…DHSV, EGNT…DLEE, EGLT…TVNA, KNLS…CTNV, HGAS…DLNA, RQQT…DLNL, and QGKT…FYKW. The 89-residue stretch at 379 to 467 folds into the Death domain; the sequence is SVLWRLASRH…DLAELAVASV (89 aa).

This Macaca fascicularis (Crab-eating macaque) protein is Ankyrin repeat and death domain-containing protein 1A (ANKDD1A).